Here is a 618-residue protein sequence, read N- to C-terminus: Putative UDP-glucuronate:xylan alpha-glucuronosyltransferase 3 (618 aa).

A helical; Signal-anchor for type II membrane protein transmembrane segment spans residues 32–54 (GVKFNTLKLVLICIMLGALFTIY). 2 residues coordinate Mn(2+): aspartate 379 and aspartate 381. Residues 379-381 (DAD), 408-410 (NSG), 435-439 (NGGDQ), and 489-495 (HYLGYNK) contribute to the substrate site. A Mn(2+)-binding site is contributed by histidine 489. Residues 598–608 (TNNSSTTTTSS) show a composition bias toward low complexity. Residues 598 to 618 (TNNSSTTTTSSPPHKTALPSL) are disordered.

The protein belongs to the glycosyltransferase 8 family. Glycogenin subfamily. The cofactor is Mn(2+).

The protein localises to the golgi apparatus membrane. Functionally, may be involved in the substitutions of the xylan backbone in stem glucuronoxylan. This chain is Putative UDP-glucuronate:xylan alpha-glucuronosyltransferase 3 (GUX3), found in Arabidopsis thaliana (Mouse-ear cress).